Reading from the N-terminus, the 495-residue chain is Catalase B (495 aa).

Positions 1-25 (MSNNKKLTSLFGAPVSDRENSMTAG) are disordered. Catalysis depends on residues His-55 and Asn-128. Tyr-338 is a binding site for heme.

Belongs to the catalase family. As to quaternary structure, homodimer. Requires heme as cofactor.

It catalyses the reaction 2 H2O2 = O2 + 2 H2O. Decomposes hydrogen peroxide into water and oxygen; serves to protect cells from the toxic effects of hydrogen peroxide. The chain is Catalase B (katB) from Staphylococcus xylosus.